The chain runs to 91 residues: Small ribosomal subunit protein uS15 (91 aa).

The protein belongs to the universal ribosomal protein uS15 family. As to quaternary structure, part of the 30S ribosomal subunit. Forms a bridge to the 50S subunit in the 70S ribosome, contacting the 23S rRNA.

In terms of biological role, one of the primary rRNA binding proteins, it binds directly to 16S rRNA where it helps nucleate assembly of the platform of the 30S subunit by binding and bridging several RNA helices of the 16S rRNA. Functionally, forms an intersubunit bridge (bridge B4) with the 23S rRNA of the 50S subunit in the ribosome. In Nautilia profundicola (strain ATCC BAA-1463 / DSM 18972 / AmH), this protein is Small ribosomal subunit protein uS15.